The following is a 196-amino-acid chain: Imidazoleglycerol-phosphate dehydratase (196 aa).

Belongs to the imidazoleglycerol-phosphate dehydratase family.

The protein resides in the cytoplasm. It catalyses the reaction D-erythro-1-(imidazol-4-yl)glycerol 3-phosphate = 3-(imidazol-4-yl)-2-oxopropyl phosphate + H2O. It participates in amino-acid biosynthesis; L-histidine biosynthesis; L-histidine from 5-phospho-alpha-D-ribose 1-diphosphate: step 6/9. This Solidesulfovibrio magneticus (strain ATCC 700980 / DSM 13731 / RS-1) (Desulfovibrio magneticus) protein is Imidazoleglycerol-phosphate dehydratase.